Reading from the N-terminus, the 161-residue chain is MDQQPGPVQQSSPPNLTNPRFTLELEFVSSLANPYYLSHLAVTYPNLLGISKSGDEGETSNESSDPEAKAFAAYLAYLYSYWKTPEYAQFLTHPGATLRALRLLQEETFRRDIIRPQVIEALAGTGVDEQGAQDTQEGEGEQKQNKEEDAQDAQENTESKT.

The interval 124 to 161 (GTGVDEQGAQDTQEGEGEQKQNKEEDAQDAQENTESKT) is disordered.

The protein belongs to the Mediator complex subunit 31 family. As to quaternary structure, component of the Mediator complex.

The protein localises to the nucleus. Component of the Mediator complex, a coactivator involved in the regulated transcription of nearly all RNA polymerase II-dependent genes. Mediator functions as a bridge to convey information from gene-specific regulatory proteins to the basal RNA polymerase II transcription machinery. Mediator is recruited to promoters by direct interactions with regulatory proteins and serves as a scaffold for the assembly of a functional preinitiation complex with RNA polymerase II and the general transcription factors. The chain is Mediator of RNA polymerase II transcription subunit 31 (soh1) from Aspergillus clavatus (strain ATCC 1007 / CBS 513.65 / DSM 816 / NCTC 3887 / NRRL 1 / QM 1276 / 107).